The sequence spans 205 residues: Ribonuclease HII (205 aa).

One can recognise an RNase H type-2 domain in the interval Glu14–Ala205. Residues Asp20, Glu21, and Asp117 each contribute to the a divalent metal cation site.

This sequence belongs to the RNase HII family. Mn(2+) serves as cofactor. The cofactor is Mg(2+).

It localises to the cytoplasm. The enzyme catalyses Endonucleolytic cleavage to 5'-phosphomonoester.. Endonuclease that specifically degrades the RNA of RNA-DNA hybrids. This Chlorobium phaeovibrioides (strain DSM 265 / 1930) (Prosthecochloris vibrioformis (strain DSM 265)) protein is Ribonuclease HII.